The following is a 725-amino-acid chain: Putative oligopeptide transporter YGL114W (725 aa).

9 helical membrane-spanning segments follow: residues 28-48 (ATIAGIAIGSLVLTSNFQFGL), 134-154 (FRELLIWSTALAFFGIFFAVP), 254-274 (IIILLKTFVVSSLYTMVSYFV), 353-373 (WILWSSLSIMVADSVVAFIVV), 449-469 (ISGCLVSSIICIVSIIYLFGI), 472-492 (IPLYAIITALILALFLSILGI), 564-584 (FCAQLIGACWSIILSSFMYLC), 644-664 (YGYGWILYIPSGVAVGVGIFN), and 697-717 (IVFSSGLVLGEGIFSVINMLF).

It belongs to the oligopeptide OPT transporter family.

It localises to the membrane. The polypeptide is Putative oligopeptide transporter YGL114W (Saccharomyces cerevisiae (strain ATCC 204508 / S288c) (Baker's yeast)).